We begin with the raw amino-acid sequence, 138 residues long: Nucleoside diphosphate kinase (138 aa).

K10, F58, R86, T92, R103, and N113 together coordinate ATP. Catalysis depends on H116, which acts as the Pros-phosphohistidine intermediate.

This sequence belongs to the NDK family. As to quaternary structure, homotetramer. Mg(2+) is required as a cofactor.

It is found in the cytoplasm. The enzyme catalyses a 2'-deoxyribonucleoside 5'-diphosphate + ATP = a 2'-deoxyribonucleoside 5'-triphosphate + ADP. The catalysed reaction is a ribonucleoside 5'-diphosphate + ATP = a ribonucleoside 5'-triphosphate + ADP. Functionally, major role in the synthesis of nucleoside triphosphates other than ATP. The ATP gamma phosphate is transferred to the NDP beta phosphate via a ping-pong mechanism, using a phosphorylated active-site intermediate. This Haemophilus ducreyi (strain 35000HP / ATCC 700724) protein is Nucleoside diphosphate kinase.